We begin with the raw amino-acid sequence, 195 residues long: Segregation and condensation protein B (195 aa).

Residues 169 to 195 (LEDVAASQENSREAGGRGSIPGHPGEE) are disordered.

Belongs to the ScpB family. In terms of assembly, homodimer. Homodimerization may be required to stabilize the binding of ScpA to the Smc head domains. Component of a cohesin-like complex composed of ScpA, ScpB and the Smc homodimer, in which ScpA and ScpB bind to the head domain of Smc. The presence of the three proteins is required for the association of the complex with DNA.

Its subcellular location is the cytoplasm. In terms of biological role, participates in chromosomal partition during cell division. May act via the formation of a condensin-like complex containing Smc and ScpA that pull DNA away from mid-cell into both cell halves. The polypeptide is Segregation and condensation protein B (Moorella thermoacetica (strain ATCC 39073 / JCM 9320)).